The primary structure comprises 219 residues: Adenylate kinase (219 aa).

Residue 10 to 15 (GAGKGT) participates in ATP binding. Residues 30–59 (STGDMLRVAVKVGTPLGIEAKKIMDSGGLV) are NMP. AMP-binding positions include Thr31, Arg36, 57–59 (GLV), 85–88 (GFPR), and Gln92. Positions 122–159 (GRRTHLKSGRTYHITYNQPKVEGIDDITGEKLVQRSDD) are LID. ATP contacts are provided by residues Arg123 and 132–133 (TY). The AMP site is built by Arg156 and Arg167. Gly202 lines the ATP pocket.

It belongs to the adenylate kinase family. As to quaternary structure, monomer.

The protein resides in the cytoplasm. The catalysed reaction is AMP + ATP = 2 ADP. It functions in the pathway purine metabolism; AMP biosynthesis via salvage pathway; AMP from ADP: step 1/1. Catalyzes the reversible transfer of the terminal phosphate group between ATP and AMP. Plays an important role in cellular energy homeostasis and in adenine nucleotide metabolism. This is Adenylate kinase from Vesicomyosocius okutanii subsp. Calyptogena okutanii (strain HA).